The following is a 286-amino-acid chain: MPDRLAVLAQYALPKRALTTWAGKWASARLGGLTTALIRRFVARYDVNMAEAANPDMAGYASFNDFFTRALQPGARPLARADLICPVDGAISQFGRIGKDRIFQAKGHAYSTTALLGGDAAMAARFDDGHFATLYLSPRDYHRVHMPCAGELTRMVHVPGELFSVNPATACVVPGLFARNERVVCVFESAPGPGGPFALVLIGAAIVGSMATVWHGQVNPPRPGTLRQWDYAKGQVRLQQGQEMGRFLLGSTVVLLLPRGPLQFNPQWAPARPIMLGQAMAQRCAD.

Catalysis depends on charge relay system; for autoendoproteolytic cleavage activity residues D88, H145, and S251. S251 serves as the catalytic Schiff-base intermediate with substrate; via pyruvic acid; for decarboxylase activity. S251 bears the Pyruvic acid (Ser); by autocatalysis mark.

Belongs to the phosphatidylserine decarboxylase family. PSD-B subfamily. Prokaryotic type I sub-subfamily. In terms of assembly, heterodimer of a large membrane-associated beta subunit and a small pyruvoyl-containing alpha subunit. It depends on pyruvate as a cofactor. In terms of processing, is synthesized initially as an inactive proenzyme. Formation of the active enzyme involves a self-maturation process in which the active site pyruvoyl group is generated from an internal serine residue via an autocatalytic post-translational modification. Two non-identical subunits are generated from the proenzyme in this reaction, and the pyruvate is formed at the N-terminus of the alpha chain, which is derived from the carboxyl end of the proenzyme. The autoendoproteolytic cleavage occurs by a canonical serine protease mechanism, in which the side chain hydroxyl group of the serine supplies its oxygen atom to form the C-terminus of the beta chain, while the remainder of the serine residue undergoes an oxidative deamination to produce ammonia and the pyruvoyl prosthetic group on the alpha chain. During this reaction, the Ser that is part of the protease active site of the proenzyme becomes the pyruvoyl prosthetic group, which constitutes an essential element of the active site of the mature decarboxylase.

The protein resides in the cell membrane. It carries out the reaction a 1,2-diacyl-sn-glycero-3-phospho-L-serine + H(+) = a 1,2-diacyl-sn-glycero-3-phosphoethanolamine + CO2. It functions in the pathway phospholipid metabolism; phosphatidylethanolamine biosynthesis; phosphatidylethanolamine from CDP-diacylglycerol: step 2/2. Its function is as follows. Catalyzes the formation of phosphatidylethanolamine (PtdEtn) from phosphatidylserine (PtdSer). The protein is Phosphatidylserine decarboxylase proenzyme of Verminephrobacter eiseniae (strain EF01-2).